The sequence spans 359 residues: Mitochondrial glutathione transporter SLC25A39 (359 aa).

The Mitochondrial intermembrane segment spans residues 1–14 (MADQDPAGISPLQQ). Solcar repeat units lie at residues 9–151 (ISPL…LKAF), 159–243 (SDLY…VKSW), and 253–347 (TSVG…GKSF). The helical transmembrane segment at 15–35 (MVASGTGAVVTSLFMTPLDVV) threads the bilayer. At 36-121 (KVRLQSQRPS…VKIVRHEGTR (86 aa)) the chain is on the mitochondrial matrix side. [2Fe-2S] cluster is bound by residues Cys74, Cys78, Cys88, and Cys94. The helical transmembrane segment at 122-142 (TLWSGLPATLVMTVPATAIYF) threads the bilayer. Over 143–160 (TAYDQLKAFLCGRALTSD) the chain is Mitochondrial intermembrane. Residues 161-181 (LYAPMVAGALARLGTVTVISP) traverse the membrane as a helical segment. Residues 182-214 (LELMRTKLQAQHVSYRELGACVRTAVAQGGWRS) are Mitochondrial matrix-facing. Residues 215–235 (LWLGWGPTALRDVPFSALYWF) form a helical membrane-spanning segment. At 236–258 (NYELVKSWLNGFRPKDQTSVGMS) the chain is on the mitochondrial intermembrane side. The helical transmembrane segment at 259–279 (FVAGGISGTVAAVLTLPFDVV) threads the bilayer. Residues 280 to 317 (KTQRQVALGAMEAVRVNPLHVDSTWLLLRRIRAESGTK) are Mitochondrial matrix-facing. A helical transmembrane segment spans residues 318–338 (GLFAGFLPRIIKAAPSCAIMI). The Mitochondrial intermembrane portion of the chain corresponds to 339 to 359 (STYEFGKSFFQRLNQDRLLGG).

The protein belongs to the mitochondrial carrier (TC 2.A.29) family. Post-translationally, cleaved and degraded by AFG3L2; degradation by AFG3L2 is regulated by the ability of SLC25A39 to bind iron-sulfur. In absence of mitochondrial glutathione, SLC25A39 binds iron-sulfur, preventing cleavage and degradation by AFG3L2. The presence of mitochondrial glutathione prevents iron-sulfur-binding to SLC25A39, promoting cleavage and degradation by AFG3L2. Expressed in many tissues. Abundant in testis and kidney.

It localises to the mitochondrion inner membrane. It carries out the reaction glutathione(in) = glutathione(out). With respect to regulation, the activity of SLC25A39 is regulated by levels of mitochondrial glutathione via its ability to bind [2Fe-2S] iron-sulfur cluster. Upon physiological levels of mitochondrial glutathione, glutathione prevents iron-sulfur-binding to SLC25A39 promoting cleavage and degradation by AFG3L2. Upon depletion of mitochondrial glutathione, SLC25A39 binds iron-sulfur, preventing cleavage and degradation by AFG3L2. Mitochondrial transporter required for glutathione import into mitochondria. Glutathione, which plays key roles in oxidative metabolism, is produced exclusively in the cytosol and is imported in many organelles. Mitochondrial glutathione is required for the activity and stability of proteins containing iron-sulfur clusters, as well as erythropoiesis. This Homo sapiens (Human) protein is Mitochondrial glutathione transporter SLC25A39.